The primary structure comprises 224 residues: Putative ankyrin repeat protein R845 (224 aa).

8 ANK repeats span residues 1 to 14, 15 to 44, 46 to 74, 75 to 104, 105 to 134, 136 to 164, 165 to 194, and 196 to 224; these read MVEY…DVRS, NYDH…DVSM, YDYI…DPRT, NNDK…DIRI, DNDS…DIRA, NDYS…DVRA, DNDY…DFRA, and NDCA…VCPY.

The chain is Putative ankyrin repeat protein R845 from Acanthamoeba polyphaga mimivirus (APMV).